The primary structure comprises 190 residues: Xanthine phosphoribosyltransferase (190 aa).

2 residues coordinate xanthine: leucine 20 and asparagine 27. Residue 129–133 (ASGSA) coordinates 5-phospho-alpha-D-ribose 1-diphosphate. Lysine 157 is a xanthine binding site.

It belongs to the purine/pyrimidine phosphoribosyltransferase family. Xpt subfamily. Homodimer.

The protein localises to the cytoplasm. The enzyme catalyses XMP + diphosphate = xanthine + 5-phospho-alpha-D-ribose 1-diphosphate. The protein operates within purine metabolism; XMP biosynthesis via salvage pathway; XMP from xanthine: step 1/1. In terms of biological role, converts the preformed base xanthine, a product of nucleic acid breakdown, to xanthosine 5'-monophosphate (XMP), so it can be reused for RNA or DNA synthesis. The sequence is that of Xanthine phosphoribosyltransferase from Clostridium tetani (strain Massachusetts / E88).